We begin with the raw amino-acid sequence, 303 residues long: Cytosolic-abundant heat soluble protein 3 (303 aa).

Low complexity predominate over residues 1-19 (MSSRQNQQSSSQHSSSSQQ). The interval 1 to 67 (MSSRQNQQSS…PGSHSEVHEE (67 aa)) is disordered. The stretch at 170–257 (ARQDEQDAGM…ESAKAQTNVN (88 aa)) forms a coiled coil. 2 CAHS motif regions span residues 184–202 (YREE…LERQ) and 221–239 (QERE…LELE). The segment covering 270 to 280 (KGAIQTSADKS) has biased composition (polar residues). The interval 270 to 303 (KGAIQTSADKSSTTKTGPTTVTQIKHTEQHTERR) is disordered. The span at 282–291 (TTKTGPTTVT) shows a compositional bias: low complexity. Residues 294–303 (KHTEQHTERR) are compositionally biased toward basic and acidic residues.

The protein belongs to the Cytosolic-abundant heat soluble protein (CAHS) family.

It localises to the cytoplasm. In terms of biological role, CAHS proteins are cytosolic heat soluble proteins that seem to contribute to the anhydrobiosis in tardigrades, but their specific mechanisms are yet to be identified. It is possible that protection during anhydrobiosis might occur via the stabilization of vitrifying small molecules such as sugars, but not via the direct glass transition of CAHS proteins themselves. The chain is Cytosolic-abundant heat soluble protein 3 from Ramazzottius varieornatus (Water bear).